The sequence spans 61 residues: Large ribosomal subunit protein bL32 (61 aa).

Over residues methionine 1–leucine 22 the composition is skewed to basic residues. Positions methionine 1–glycine 24 are disordered.

Belongs to the bacterial ribosomal protein bL32 family.

This is Large ribosomal subunit protein bL32 from Rubrobacter xylanophilus (strain DSM 9941 / JCM 11954 / NBRC 16129 / PRD-1).